We begin with the raw amino-acid sequence, 108 residues long: MADPRLRQIKIKTGVVKRLAKEKVMYEKEAKQQEEKIEKMKAEACDDYGIKKQAEILQESRMMIPDCQRRLEIAHADLTQLLENEKELEEAEEYKEARSILESVKLEA.

An N-acetylalanine modification is found at Ala2.

This sequence belongs to the TBCA family. As to quaternary structure, supercomplex made of cofactors A to E. Cofactors A and D function by capturing and stabilizing tubulin in a quasi-native conformation. Cofactor E binds to the cofactor D-tubulin complex; interaction with cofactor C then causes the release of tubulin polypeptides that are committed to the native state.

It localises to the cytoplasm. Its subcellular location is the cytoskeleton. Its function is as follows. Tubulin-folding protein; involved in the early step of the tubulin folding pathway. This chain is Tubulin-specific chaperone A (TBCA), found in Gallus gallus (Chicken).